The sequence spans 324 residues: Geranylgeranyl diphosphate synthase (324 aa).

Residues Lys-46, Arg-49, and His-78 each contribute to the isopentenyl diphosphate site. The Mg(2+) site is built by Asp-85 and Asp-89. Arg-94 is an an all-trans-polyprenyl diphosphate binding site. Arg-95 contacts isopentenyl diphosphate. Residues Lys-176, Thr-177, Gln-214, Lys-231, and Lys-241 each coordinate an all-trans-polyprenyl diphosphate.

Belongs to the FPP/GGPP synthase family. It depends on Mg(2+) as a cofactor.

It carries out the reaction isopentenyl diphosphate + (2E,6E)-farnesyl diphosphate = (2E,6E,10E)-geranylgeranyl diphosphate + diphosphate. It functions in the pathway isoprenoid biosynthesis; geranylgeranyl diphosphate biosynthesis; geranylgeranyl diphosphate from farnesyl diphosphate and isopentenyl diphosphate: step 1/1. Catalyzes the sequential condensation of isopentenyl pyrophosphate with the allylic pyrophosphates to yield geranylgeranyl diphosphate (GGPP) which is a precursor of the ether-linked lipids. In Methanosarcina mazei (strain ATCC BAA-159 / DSM 3647 / Goe1 / Go1 / JCM 11833 / OCM 88) (Methanosarcina frisia), this protein is Geranylgeranyl diphosphate synthase.